The following is a 743-amino-acid chain: 1,4-alpha-glucan branching enzyme GlgB (743 aa).

The Nucleophile role is filled by Asp-423. Catalysis depends on Glu-476, which acts as the Proton donor.

This sequence belongs to the glycosyl hydrolase 13 family. GlgB subfamily. In terms of assembly, monomer.

It carries out the reaction Transfers a segment of a (1-&gt;4)-alpha-D-glucan chain to a primary hydroxy group in a similar glucan chain.. The protein operates within glycan biosynthesis; glycogen biosynthesis. Catalyzes the formation of the alpha-1,6-glucosidic linkages in glycogen by scission of a 1,4-alpha-linked oligosaccharide from growing alpha-1,4-glucan chains and the subsequent attachment of the oligosaccharide to the alpha-1,6 position. The protein is 1,4-alpha-glucan branching enzyme GlgB of Pseudomonas fluorescens (strain ATCC BAA-477 / NRRL B-23932 / Pf-5).